Consider the following 209-residue polypeptide: Protein GrpE (209 aa).

Composition is skewed to basic and acidic residues over residues 1–16 (MKKSTKKESTHSKEES) and 34–44 (KAGEKTAEPEK). The interval 1–61 (MKKSTKKEST…EKSPEAACRE (61 aa)) is disordered.

It belongs to the GrpE family. Homodimer.

Its subcellular location is the cytoplasm. Functionally, participates actively in the response to hyperosmotic and heat shock by preventing the aggregation of stress-denatured proteins, in association with DnaK and GrpE. It is the nucleotide exchange factor for DnaK and may function as a thermosensor. Unfolded proteins bind initially to DnaJ; upon interaction with the DnaJ-bound protein, DnaK hydrolyzes its bound ATP, resulting in the formation of a stable complex. GrpE releases ADP from DnaK; ATP binding to DnaK triggers the release of the substrate protein, thus completing the reaction cycle. Several rounds of ATP-dependent interactions between DnaJ, DnaK and GrpE are required for fully efficient folding. The polypeptide is Protein GrpE (Methanosarcina acetivorans (strain ATCC 35395 / DSM 2834 / JCM 12185 / C2A)).